Consider the following 224-residue polypeptide: Serum amyloid P-component (224 aa).

The N-terminal stretch at 1-20 is a signal peptide; it reads MDKLLLWMFVFTSLLSEAFC. Residues 25–224 form the Pentraxin (PTX) domain; that stretch reads KRKVFVFPRE…YVVIRPRVWD (200 aa). Asn52 carries N-linked (GlcNAc...) asparagine glycosylation. Cys56 and Cys115 are oxidised to a cystine. Ca(2+)-binding residues include Asp78, Asn79, Glu156, Gln157, Asp158, and Gln168.

The protein belongs to the pentraxin family. In terms of assembly, homopentamer. Pentraxin (or pentaxin) have a discoid arrangement of 5 non-covalently bound subunits. The cofactor is Ca(2+).

It localises to the secreted. This is Serum amyloid P-component (Apcs) from Mus musculus (Mouse).